We begin with the raw amino-acid sequence, 38 residues long: Large ribosomal subunit protein bL36 (38 aa).

The protein belongs to the bacterial ribosomal protein bL36 family.

In Alcanivorax borkumensis (strain ATCC 700651 / DSM 11573 / NCIMB 13689 / SK2), this protein is Large ribosomal subunit protein bL36.